The sequence spans 729 residues: Probable ATP-dependent RNA helicase DDX17 (729 aa).

A disordered region spans residues 20–115 (EAATVASATG…PPKKFGNPGE (96 aa)). Ser-64 bears the Phosphoserine mark. The segment covering 86–95 (GDRDRDRDRG) has biased composition (basic and acidic residues). Residues 96–105 (GFGARGGGGL) are compositionally biased toward gly residues. N6-acetyllysine; by EP300 is present on residues Lys-108, Lys-109, and Lys-121. A Glycyl lysine isopeptide (Lys-Gly) (interchain with G-Cter in SUMO); alternate cross-link involves residue Lys-129. A Glycyl lysine isopeptide (Lys-Gly) (interchain with G-Cter in SUMO1); alternate cross-link involves residue Lys-129. Lys-129 participates in a covalent cross-link: Glycyl lysine isopeptide (Lys-Gly) (interchain with G-Cter in SUMO2); alternate. Residues 171–199 (FAFHHANFPQYVMDVLMDQHFTEPTPIQC) carry the Q motif motif. Residues 202-377 (FPLALSGRDM…EDFLRDYTQI (176 aa)) enclose the Helicase ATP-binding domain. 215 to 222 (AQTGSGKT) serves as a coordination point for ATP. Positions 325–328 (DEAD) match the DEAD box motif. The region spanning 405–552 (KLIQLMEEIM…AINPKLMQLV (148 aa)) is the Helicase C-terminal domain. Thr-523 carries the phosphothreonine modification. Lys-528 participates in a covalent cross-link: Glycyl lysine isopeptide (Lys-Gly) (interchain with G-Cter in SUMO2). The tract at residues 547-729 (KLMQLVDHRG…PPPPPPPSRK (183 aa)) is transactivation domain. 2 disordered regions span residues 551–623 (LVDH…GSPN) and 659–729 (TYGA…PSRK). The span at 568 to 578 (RTTSSANNPNL) shows a compositional bias: polar residues. Basic and acidic residues predominate over residues 583 to 610 (ECDRRLRGVKDGGRRDSASYRDRSETDR). Over residues 659–688 (TYGASSTTSTGRSSQSSSQQFSGIGRSGQQ) the composition is skewed to low complexity. An Omega-N-methylarginine modification is found at Arg-684. The segment covering 689 to 698 (PQPLMSQQFA) has biased composition (polar residues). Positions 717-729 (YPPPPPPPPPSRK) are enriched in pro residues. Residues 718–726 (PPPPPPPPP) are interaction with YAP1.

The protein belongs to the DEAD box helicase family. DDX5/DBP2 subfamily. In terms of assembly, interacts with DDX5 in an RNA-independent manner. Interacts with CDK9 transcription elongation complex under basal conditions. Following cell stimulation with poly(I:C), a synthetic double-stranded RNA mimicking viral infection, the interaction with CDK9 is decreased. Interacts with ESR1 in an estrogen-independent manner. Interacts with HNRNPH1; this interaction is important for the regulation of alternative splicing on G-quadruplex structures. At high, but not low, cell density, interacts with DROSHA and DGCR8, the core components of the microprocessor complex involved in the maturation of primary microRNAs (pri-miRNAs) into pre-miRNAs. The interaction with DGCR8 is reduced during mitosis. At low, but not high, cell density, interacts with YAP1 and with its paralog, WWTR1/TAZ. Interactions with DROSHA and YAP1 are mutually exclusive. In vitro, the pre-miRNA processing activity of the DDX17-containing microprocessor complex is weaker than that of the DROSHA/DGCR8 microprocessor complex devoid of DDX17. Interacts with UPF3B. Interacts with NFAT5; this interaction leads to DDX17 recruitment to LNC2 and S100A4 promoters and NFAT5-mediated DDX17-enhanced transactivation. Interacts with HDAC1, HDAC2 and HDAC3; this interaction with HDAC1 and HDAC3, but not HDAC2, depends upon DDX17 acetylation. Interacts with ZC3HAV1 (via N-terminal domain) in an RNA-independent manner. Interacts with EXOSC3/RRP40 and EXOSC5/RRP46; this interaction may be indirect and mediated by ZC3HAV1-binding. Interacts with EP300; this interaction leads to acetylation at lysine residues. Interacts with CREBBP/CBP and KAT2B/P/CAF. Directly interacts with CTNNB1. Interacts with MYOD1. Interacts with TP53. Interacts with DCP1A in an RNA-independent manner. Interacts with DCP2 in an RNA-dependent manner. Interacts with DHX36; this interaction occurs in a RNA-dependent manner. Interacts with ERCC6. Post-translationally, sumoylation significantly increases stability. It also promotes interaction specifically with HDAC1 (but not HDAC2, nor HDAC3) and strongly stimulates ESR1 and TP53 coactivation. In terms of processing, acetylation at lysine residues stabilizes the protein, stimulates interaction with HDAC1 and HDAC3, but not HDAC2, and represses ESR1 and TP53 coactivation activity. Widely expressed. Low expression, if any, in normal colonic epithelial cells (at protein level). Levels tend to increase during colon cancer progression, from very low in benign hyperplastic polyps to very high in tubular and villous adenomas.

Its subcellular location is the nucleus. It is found in the nucleolus. The protein resides in the cytoplasm. The protein localises to the cytosol. The enzyme catalyses ATP + H2O = ADP + phosphate + H(+). Functionally, as an RNA helicase, unwinds RNA and alters RNA structures through ATP binding and hydrolysis. Involved in multiple cellular processes, including pre-mRNA splicing, alternative splicing, ribosomal RNA processing and miRNA processing, as well as transcription regulation. Regulates the alternative splicing of exons exhibiting specific features. For instance, promotes the inclusion of AC-rich alternative exons in CD44 transcripts. This function requires the RNA helicase activity. Affects NFAT5 and histone macro-H2A.1/MACROH2A1 alternative splicing in a CDK9-dependent manner. In NFAT5, promotes the introduction of alternative exon 4, which contains 2 stop codons and may target NFAT5 exon 4-containing transcripts to nonsense-mediated mRNA decay, leading to the down-regulation of NFAT5 protein. Affects splicing of mediators of steroid hormone signaling pathway, including kinases that phosphorylates ESR1, such as CDK2, MAPK1 and GSK3B, and transcriptional regulators, such as CREBBP, MED1, NCOR1 and NCOR2. By affecting GSK3B splicing, participates in ESR1 and AR stabilization. In myoblasts and epithelial cells, cooperates with HNRNPH1 to control the splicing of specific subsets of exons. In addition to binding mature mRNAs, also interacts with certain pri-microRNAs, including MIR663/miR-663a, MIR99B/miR-99b, and MIR6087/miR-6087. Binds pri-microRNAs on the 3' segment flanking the stem loop via the 5'-[ACG]CAUC[ACU]-3' consensus sequence. Required for the production of subsets of microRNAs, including MIR21 and MIR125B1. May be involved not only in microRNA primary transcript processing, but also stabilization. Participates in MYC down-regulation at high cell density through the production of MYC-targeting microRNAs. Along with DDX5, may be involved in the processing of the 32S intermediate into the mature 28S ribosomal RNA. Promoter-specific transcription regulator, functioning as a coactivator or corepressor depending on the context of the promoter and the transcriptional complex in which it exists. Enhances NFAT5 transcriptional activity. Synergizes with TP53 in the activation of the MDM2 promoter; this activity requires acetylation on lysine residues. May also coactivate MDM2 transcription through a TP53-independent pathway. Coactivates MMP7 transcription. Along with CTNNB1, coactivates MYC, JUN, FOSL1 and cyclin D1/CCND1 transcription. Alone or in combination with DDX5 and/or SRA1 non-coding RNA, plays a critical role in promoting the assembly of proteins required for the formation of the transcription initiation complex and chromatin remodeling leading to coactivation of MYOD1-dependent transcription. This helicase-independent activity is required for skeletal muscle cells to properly differentiate into myotubes. During epithelial-to-mesenchymal transition, coregulates SMAD-dependent transcriptional activity, directly controlling key effectors of differentiation, including miRNAs which in turn directly repress its expression. Plays a role in estrogen and testosterone signaling pathway at several levels. Mediates the use of alternative promoters in estrogen-responsive genes and regulates transcription and splicing of a large number of steroid hormone target genes. Contrary to splicing regulation activity, transcriptional coregulation of the estrogen receptor ESR1 is helicase-independent. Plays a role in innate immunity. Specifically restricts bunyavirus infection, including Rift Valley fever virus (RVFV) or La Crosse virus (LACV), but not vesicular stomatitis virus (VSV), in an interferon- and DROSHA-independent manner. Binds to RVFV RNA, likely via structured viral RNA elements. Promotes mRNA degradation mediated by the antiviral zinc-finger protein ZC3HAV1, in an ATPase-dependent manner. This is Probable ATP-dependent RNA helicase DDX17 (DDX17) from Homo sapiens (Human).